The primary structure comprises 350 residues: Dihydroorotase (350 aa).

Zn(2+) contacts are provided by His17 and His19. Substrate contacts are provided by residues 19–21 (HFR) and Asn45. Zn(2+) is bound by residues Lys103, His140, and His178. N6-carboxylysine is present on Lys103. Position 140 (His140) interacts with substrate. Leu223 is a binding site for substrate. A Zn(2+)-binding site is contributed by Asp251. Asp251 is an active-site residue. Residues His255 and Ala267 each coordinate substrate.

The protein belongs to the metallo-dependent hydrolases superfamily. DHOase family. Class II DHOase subfamily. Homodimer. Requires Zn(2+) as cofactor.

The catalysed reaction is (S)-dihydroorotate + H2O = N-carbamoyl-L-aspartate + H(+). The protein operates within pyrimidine metabolism; UMP biosynthesis via de novo pathway; (S)-dihydroorotate from bicarbonate: step 3/3. Its function is as follows. Catalyzes the reversible cyclization of carbamoyl aspartate to dihydroorotate. This Photorhabdus laumondii subsp. laumondii (strain DSM 15139 / CIP 105565 / TT01) (Photorhabdus luminescens subsp. laumondii) protein is Dihydroorotase.